The primary structure comprises 234 residues: MAENHCELLPPAPSGLGAGLGGGLCRRCSAGIGALAQRPSGVSKWVRLNVGGTYFLTTRQTLCRDPKSFLYRLCQADPDLDSDKDETGAYLIDRDPTYFGPVLNYLRHGKLVINRDLAEEGVLEEAEFYNITSLIKLVKDKIRERDSKTSQMPVKHVYRVLQCQEEELTQMVSTMSDGWKFEQLVSIGSSYNYGNEDQAEFLCVVSKELHNTPYGTTSEPSEKAKILQERGSRM.

At alanine 2 the chain carries N-acetylalanine. The BTB domain occupies 44–146 (KWVRLNVGGT…LVKDKIRERD (103 aa)). The segment at 213 to 234 (PYGTTSEPSEKAKILQERGSRM) is disordered. A compositionally biased stretch (basic and acidic residues) spans 220 to 234 (PSEKAKILQERGSRM).

In terms of assembly, homopentamer. Interacts (via C-terminus) with GRASP55/GORASP2. Interacts with CUL3 and with ubiquitinated proteins. Interacts with CRY1.

Its subcellular location is the cytoplasm. It localises to the cytosol. It is found in the nucleus. In terms of biological role, its interaction with CUL3 suggests that it may act as a substrate adapter in some E3 ligase complex. Does not affect the function of Kv channel Kv2.1/KCNB1, Kv1.2/KCNA2, Kv4.2/KCND2 and Kv3.4/KCNC4. The polypeptide is BTB/POZ domain-containing protein KCTD5 (Kctd5) (Rattus norvegicus (Rat)).